The following is a 313-amino-acid chain: Ornithine carbamoyltransferase (313 aa).

Residues Ser57–Thr60, Gln84, Arg108, and His135–Gln138 each bind carbamoyl phosphate. L-ornithine contacts are provided by residues Asn166, Asp230, and Ser234–Met235. Carbamoyl phosphate-binding positions include Cys270–Leu271 and Arg298.

This sequence belongs to the aspartate/ornithine carbamoyltransferase superfamily. OTCase family. Homohexamer.

It localises to the cytoplasm. It carries out the reaction carbamoyl phosphate + L-ornithine = L-citrulline + phosphate + H(+). It functions in the pathway amino-acid biosynthesis; L-arginine biosynthesis; L-arginine from L-ornithine and carbamoyl phosphate: step 1/3. Its function is as follows. Reversibly catalyzes the transfer of the carbamoyl group from carbamoyl phosphate (CP) to the N(epsilon) atom of ornithine (ORN) to produce L-citrulline. The chain is Ornithine carbamoyltransferase from Gloeobacter violaceus (strain ATCC 29082 / PCC 7421).